The primary structure comprises 214 residues: Large ribosomal subunit protein uL2my, C-terminal part (214 aa).

A mitochondrion-targeting transit peptide spans 1 to 30 (MSGLVALCRARASASSSLFNSVIRPAFRNF). The segment at 157-214 (VAMNPCDHPHGGGEGKSKSSGSRGRTSVSPWGKPCKGGYKSASVKKKKKRLAEAAAKM) is disordered. Residues 163–173 (DHPHGGGEGKS) show a composition bias toward basic and acidic residues. Over residues 174 to 185 (KSSGSRGRTSVS) the composition is skewed to low complexity.

It belongs to the universal ribosomal protein uL2 family. In terms of assembly, component of the mitochondrial ribosome large subunit.

It localises to the mitochondrion. The polypeptide is Large ribosomal subunit protein uL2my, C-terminal part (Arabidopsis thaliana (Mouse-ear cress)).